The following is a 358-amino-acid chain: MATGDDSFPWDQDSILSRDLFSATSTELCYENLNRSCVRSPYSPGPRLILYAVFGFGAVLAVCGNLLVMTSILHFRQLHSPANFLVASLACADFLVGVMVMPFSMVRSVEGCWYFGESYCKFHSCFEGSFCYSSLFHLCFISVDRYIAVSDPLTYPTRFTASVSGKCITFSWLLSIIYSFSLLYTGANDAGLEDLVSALTCVGGCQIAVNQTWVFINFLLFLIPTLVMITVYSKIFLIAKQQAQNIEKMSKQTARASESYKDRVTKRERKAAKTLGIAVAAFLLSWLPYFIDSIIDAFLGFITPTYVYEILVWIVYYNSAMNPLIYAFFYSWFRKAIKLIVSGKILRENSSTTNLFPE.

Residues 1–47 (MATGDDSFPWDQDSILSRDLFSATSTELCYENLNRSCVRSPYSPGPR) lie on the Extracellular side of the membrane. N-linked (GlcNAc...) asparagine glycosylation occurs at N34. 2 disulfides stabilise this stretch: C37-C201 and C120-C205. A helical membrane pass occupies residues 48–68 (LILYAVFGFGAVLAVCGNLLV). At 69-83 (MTSILHFRQLHSPAN) the chain is on the cytoplasmic side. The helical transmembrane segment at 84 to 104 (FLVASLACADFLVGVMVMPFS) threads the bilayer. The Extracellular portion of the chain corresponds to 105-121 (MVRSVEGCWYFGESYCK). The helical transmembrane segment at 122–143 (FHSCFEGSFCYSSLFHLCFISV) threads the bilayer. The Cytoplasmic segment spans residues 144 to 166 (DRYIAVSDPLTYPTRFTASVSGK). A helical transmembrane segment spans residues 167 to 187 (CITFSWLLSIIYSFSLLYTGA). Topologically, residues 188–212 (NDAGLEDLVSALTCVGGCQIAVNQT) are extracellular. N210 is a glycosylation site (N-linked (GlcNAc...) asparagine). A helical membrane pass occupies residues 213-233 (WVFINFLLFLIPTLVMITVYS). The Cytoplasmic segment spans residues 234–274 (KIFLIAKQQAQNIEKMSKQTARASESYKDRVTKRERKAAKT). Residues 275–295 (LGIAVAAFLLSWLPYFIDSII) traverse the membrane as a helical segment. Residues 296-309 (DAFLGFITPTYVYE) lie on the Extracellular side of the membrane. A helical transmembrane segment spans residues 310-333 (ILVWIVYYNSAMNPLIYAFFYSWF). Topologically, residues 334 to 358 (RKAIKLIVSGKILRENSSTTNLFPE) are cytoplasmic.

The protein belongs to the G-protein coupled receptor 1 family. In terms of tissue distribution, specifically expressed in neurons of the olfactory epithelium.

It is found in the cell membrane. In terms of biological role, olfactory receptor specific for trace amines, such as beta-phenylethylamine (beta-PEA). Trace amine compounds are enriched in animal body fluids and act on trace amine-associated receptors (TAARs) to elicit both intraspecific and interspecific innate behaviors. Ligand-binding causes a conformation change that triggers signaling via G(s)-class of G alpha proteins (GNAL or GNAS). This Mus musculus (Mouse) protein is Trace amine-associated receptor 7d.